Consider the following 444-residue polypeptide: Glutamyl-tRNA reductase (444 aa).

Substrate-binding positions include Thr-49–Arg-52, Ser-109, Glu-114–Gln-116, and Gln-120. Residue Cys-50 is the Nucleophile of the active site. Gly-189–Gly-194 serves as a coordination point for NADP(+).

It belongs to the glutamyl-tRNA reductase family. In terms of assembly, homodimer.

It carries out the reaction (S)-4-amino-5-oxopentanoate + tRNA(Glu) + NADP(+) = L-glutamyl-tRNA(Glu) + NADPH + H(+). It participates in porphyrin-containing compound metabolism; protoporphyrin-IX biosynthesis; 5-aminolevulinate from L-glutamyl-tRNA(Glu): step 1/2. In terms of biological role, catalyzes the NADPH-dependent reduction of glutamyl-tRNA(Glu) to glutamate 1-semialdehyde (GSA). The chain is Glutamyl-tRNA reductase from Bacillus cereus (strain ZK / E33L).